The primary structure comprises 441 residues: Double-stranded RNA-binding protein 1 (441 aa).

DRBM domains lie at 1–71 (MYKS…HLSS), 86–155 (SYKS…SLPQ), and 169–237 (SYKN…HFED). The interval 69-88 (LSSLPLPPPPPPSENQSSYK) is disordered.

Its function is as follows. Binds double-stranded RNA. The polypeptide is Double-stranded RNA-binding protein 1 (DRB1) (Oryza sativa subsp. japonica (Rice)).